The chain runs to 288 residues: Single myb histone 4 (288 aa).

Disordered regions lie at residues 1-42 (MGAP…PVLS), 62-87 (GLGSSKLRVPKITGPSSSPSSSSQPL), and 181-206 (DSLATRTPAPMNASAPKQKDPSKPSK). One can recognise an HTH myb-type domain in the interval 1-60 (MGAPKQKWTSEEEDALRAGVRKHGAGKWRTIQKDPEFSPVLSSRSNIDLKDKWRNLSFSA). A DNA-binding region (H-T-H motif) is located at residues 28–56 (WRTIQKDPEFSPVLSSRSNIDLKDKWRNL). Over residues 76–87 (PSSSPSSSSQPL) the composition is skewed to low complexity. Positions 113–181 (TLPKYGAMIM…KIDKSYRLPD (69 aa)) constitute an H15 domain. Residues 230 to 250 (KVADAEAKAHDAHDQTMEAER) are a coiled coil.

This sequence belongs to the histone H1/H5 family. SMH subfamily. Forms a homodimer and heterodimers.

The protein localises to the nucleus. Its subcellular location is the chromosome. It is found in the nucleolus. It localises to the telomere. Functionally, binds preferentially double-stranded telomeric repeats, but may also bind to the single telomeric strand. The sequence is that of Single myb histone 4 (SMH4) from Zea mays (Maize).